The sequence spans 31 residues: Photosystem II reaction center protein T (31 aa).

A helical transmembrane segment spans residues 3-23 (SFAYVLILTLAIATLFFAIAF).

The protein belongs to the PsbT family. As to quaternary structure, PSII is composed of 1 copy each of membrane proteins PsbA, PsbB, PsbC, PsbD, PsbE, PsbF, PsbH, PsbI, PsbJ, PsbK, PsbL, PsbM, PsbT, PsbX, PsbY, PsbZ, Psb30/Ycf12, peripheral proteins PsbO, CyanoQ (PsbQ), PsbU, PsbV and a large number of cofactors. It forms dimeric complexes.

The protein resides in the cellular thylakoid membrane. In terms of biological role, found at the monomer-monomer interface of the photosystem II (PS II) dimer, plays a role in assembly and dimerization of PSII. PSII is a light-driven water plastoquinone oxidoreductase, using light energy to abstract electrons from H(2)O, generating a proton gradient subsequently used for ATP formation. In Parasynechococcus marenigrum (strain WH8102), this protein is Photosystem II reaction center protein T.